Reading from the N-terminus, the 131-residue chain is MRKRVYYWTDSEHINKPVISDTILNTGVKINILKAKVEPQEAFLILELFGSKETIEKALNYLSKFGEVEEISKVIKRDLEKCVHCGCCITQCPINVIYMDEDYNVVFKEEDCVGCKNCLKACPFKAIEIFE.

4Fe-4S ferredoxin-type domains lie at 73-102 (KVIK…MDED) and 103-131 (YNVV…EIFE). The [4Fe-4S] cluster site is built by Cys82, Cys85, Cys88, Cys92, Cys112, Cys115, Cys118, and Cys122.

As to quaternary structure, may form a complex with MJ0100. The cofactor is [4Fe-4S] cluster.

It participates in amino-acid biosynthesis. Its function is as follows. Required for O-acetylhomoserine sulfhydrylase (OAHS)-independent homocysteine (Hcy) biosynthesis. Together with MJ0100, catalyzes the condensation of sulfide with aspartate semialdehyde to generate homocysteine. May be involved in the reduction of the disulfide formed in MJ0100. This is L-aspartate semialdehyde sulfurtransferase iron-sulfur subunit from Methanocaldococcus jannaschii (strain ATCC 43067 / DSM 2661 / JAL-1 / JCM 10045 / NBRC 100440) (Methanococcus jannaschii).